A 737-amino-acid polypeptide reads, in one-letter code: Lysyl oxidase homolog 2A (737 aa).

A signal peptide spans 1 to 18 (MAVSSALCIFSLLVLAQA). SRCR domains lie at 29 to 130 (LRLA…VICN), 159 to 270 (IRPI…VSCV), 294 to 393 (VRLR…VRCN), and 403 to 512 (IRLS…VSCS). 9 cysteine pairs are disulfide-bonded: Cys55–Cys119, Cys68–Cys129, Cys99–Cys109, Cys188–Cys259, Cys201–Cys269, Cys235–Cys245, Cys319–Cys382, Cys332–Cys392, and Cys363–Cys373. N-linked (GlcNAc...) asparagine glycosylation occurs at Asn256. Residue Asn423 is glycosylated (N-linked (GlcNAc...) asparagine). Intrachain disulfides connect Cys432–Cys498, Cys445–Cys511, and Cys479–Cys489. A lysyl-oxidase like region spans residues 516–718 (PDLVLNAQLV…WTYSCHIGGS (203 aa)). 2 residues coordinate Ca(2+): Asp517 and Leu518. Intrachain disulfides connect Cys541–Cys592, Cys547–Cys662, Cys624–Cys640, and Cys630–Cys652. Positions 593, 595, and 597 each coordinate Cu cation. A glycan (N-linked (GlcNAc...) asparagine) is linked at Asn611. The segment at residues 620-656 (KASFCLEDTHCDEGISKRYHCANFGEQGITVGCWDTY) is a cross-link (lysine tyrosylquinone (Lys-Tyr)). The residue at position 656 (Tyr656) is a 2',4',5'-topaquinone. 4 residues coordinate Ca(2+): Glu689, Asp691, Asn694, and Asn695. Cys699 and Cys713 are disulfide-bonded.

It belongs to the lysyl oxidase family. It depends on Cu cation as a cofactor. The cofactor is lysine tyrosylquinone residue. Post-translationally, the lysine tyrosylquinone cross-link (LTQ) is generated by condensation of the epsilon-amino group of a lysine with a topaquinone produced by oxidation of tyrosine.

The protein resides in the secreted. Its subcellular location is the extracellular space. It localises to the extracellular matrix. It is found in the basement membrane. The protein localises to the nucleus. The protein resides in the chromosome. Its subcellular location is the endoplasmic reticulum. The catalysed reaction is L-lysyl-[protein] + O2 + H2O = (S)-2-amino-6-oxohexanoyl-[protein] + H2O2 + NH4(+). Its function is as follows. Mediates the post-translational oxidative deamination of lysine residues on target proteins leading to the formation of deaminated lysine (allysine). Acts as a transcription corepressor and specifically mediates deamination of trimethylated 'Lys-4' of histone H3 (H3K4me3), a specific tag for epigenetic transcriptional activation. Shows no activity against histone H3 when it is trimethylated on 'Lys-9' (H3K9me3) or 'Lys-27' (H3K27me3) or when 'Lys-4' is monomethylated (H3K4me1) or dimethylated (H3K4me2). Also mediates deamination of methylated TAF10, a member of the transcription factor IID (TFIID) complex, which induces release of TAF10 from promoters, leading to inhibition of TFIID-dependent transcription. LOXL2-mediated deamination of TAF10 results in transcriptional repression of genes required for embryonic stem cell pluripotency. Involved in epithelial to mesenchymal transition (EMT) and participates in repression of E-cadherin, probably by mediating deamination of histone H3. When secreted into the extracellular matrix, promotes cross-linking of extracellular matrix proteins by mediating oxidative deamination of peptidyl lysine residues in precursors to fibrous collagen and elastin. Acts as a regulator of sprouting angiogenesis, probably via collagen IV scaffolding. Acts as a regulator of chondrocyte differentiation, probably by regulating expression of factors that control chondrocyte differentiation. Required with loxl2b for correct expression of Sox2 and for neural differentiation. The protein is Lysyl oxidase homolog 2A (loxl2a) of Danio rerio (Zebrafish).